A 295-amino-acid chain; its full sequence is Bifunctional protein FolD 1 (295 aa).

NADP(+)-binding positions include 165 to 167 (GKS), isoleucine 190, and isoleucine 231.

It belongs to the tetrahydrofolate dehydrogenase/cyclohydrolase family. As to quaternary structure, homodimer.

It catalyses the reaction (6R)-5,10-methylene-5,6,7,8-tetrahydrofolate + NADP(+) = (6R)-5,10-methenyltetrahydrofolate + NADPH. The enzyme catalyses (6R)-5,10-methenyltetrahydrofolate + H2O = (6R)-10-formyltetrahydrofolate + H(+). The protein operates within one-carbon metabolism; tetrahydrofolate interconversion. Functionally, catalyzes the oxidation of 5,10-methylenetetrahydrofolate to 5,10-methenyltetrahydrofolate and then the hydrolysis of 5,10-methenyltetrahydrofolate to 10-formyltetrahydrofolate. The protein is Bifunctional protein FolD 1 of Rhizorhabdus wittichii (strain DSM 6014 / CCUG 31198 / JCM 15750 / NBRC 105917 / EY 4224 / RW1) (Sphingomonas wittichii).